A 252-amino-acid polypeptide reads, in one-letter code: Trans-aconitate 2-methyltransferase (252 aa).

Belongs to the methyltransferase superfamily. Tam family.

Its subcellular location is the cytoplasm. It carries out the reaction trans-aconitate + S-adenosyl-L-methionine = (E)-3-(methoxycarbonyl)pent-2-enedioate + S-adenosyl-L-homocysteine. Its function is as follows. Catalyzes the S-adenosylmethionine monomethyl esterification of trans-aconitate. The chain is Trans-aconitate 2-methyltransferase from Escherichia coli O6:H1 (strain CFT073 / ATCC 700928 / UPEC).